Consider the following 455-residue polypeptide: Protein indeterminate-domain 7 (455 aa).

Positions 1 to 52 are disordered; the sequence is MMMNRDILFHQQQQQQMEENMSNLTSASGDQASVSSGNRTETSGSNINQHHQ. The span at 17–49 shows a compositional bias: polar residues; it reads MEENMSNLTSASGDQASVSSGNRTETSGSNINQ. The residue at position 82 (S82) is a Phosphoserine. 2 C2H2-type zinc fingers span residues 92-114 and 134-164; these read FICEVCNKGFQRDQNLQLHKRGH and YVCPEPGCVHHHPSRALGDLTGIKKHFFRKH. A Nuclear localization signal motif is present at residues 156-163; the sequence is IKKHFFRK. Residues 169–192 form a C2H2-type 2; degenerate zinc finger; sequence WKCEKCSKKYAVQSDWKAHAKTCG. Zn(2+)-binding residues include C171, C174, H187, C191, C198, C200, H213, and C217. The CCHC-type 2; atypical zinc finger occupies 196 to 219; the sequence is YKCDCGTLFSRRDSFITHRAFCDA. The SHR-binding stretch occupies residues 206-218; that stretch reads RRDSFITHRAFCD. The interval 235–351 is disordered; sequence QASNSPHHHH…PEEEERSSRS (117 aa). Composition is skewed to low complexity over residues 248–265 and 288–299; these read QQNIGFSSSSQNIISNSN and SSNPNPNGNNGN.

It localises to the nucleus. Probable transcription factor. The sequence is that of Protein indeterminate-domain 7 from Arabidopsis thaliana (Mouse-ear cress).